Here is a 759-residue protein sequence, read N- to C-terminus: Probable Na(+)/H(+) antiporter C3A11.09 (759 aa).

Helical transmembrane passes span 12–32 (HLAY…SLII), 36–56 (LFLG…PYVA), 105–125 (MLLP…YALI), 133–153 (SLAI…SIVG), 172–192 (ESGC…YLII), 206–226 (IIIL…GVIA), 244–264 (FLVF…IIGV), 295–315 (VIDL…MPWP), 319–339 (MPHM…ILIA), 361–381 (ALFA…CLVA), and 415–435 (VVCF…AFFM). The residue at position 442 (Thr-442) is a Phosphothreonine. At Ser-446 the chain carries Phosphoserine. Thr-448 carries the post-translational modification Phosphothreonine. Basic and acidic residues-rich tracts occupy residues 514–529 (LREE…HYDA), 537–547 (YESRQPRRSNE), 590–601 (IDEKLAQGDPKA), 622–647 (NLHE…ENHR), and 655–671 (SESH…RREQ). 3 disordered regions span residues 514–558 (LREE…NPGD), 578–606 (SHTS…SFGR), and 622–759 (NLHE…RAWE). Residues 696–713 (NENNESSSDTRNGLLSDN) show a composition bias toward polar residues. N-linked (GlcNAc...) asparagine glycans are attached at residues Asn-699 and Asn-713. Over residues 724-733 (RAPSAAVSSE) the composition is skewed to low complexity. Ser-735 bears the Phosphoserine mark.

It belongs to the fungal Na(+)/H(+) exchanger family.

Its subcellular location is the membrane. Sodium export from cell, takes up external protons in exchange for internal sodium ions. The chain is Probable Na(+)/H(+) antiporter C3A11.09 (sod22) from Schizosaccharomyces pombe (strain 972 / ATCC 24843) (Fission yeast).